The following is a 305-amino-acid chain: Probable lipid kinase YegS-like (305 aa).

The DAGKc domain maps to 1-129; the sequence is MSERKALLIL…IDLGEVGGQI (129 aa). ATP-binding positions include T39, 65-71, and T92; that span reads GDGTLRD. Positions 210, 213, and 215 each coordinate Mg(2+). E268 (proton acceptor) is an active-site residue.

The protein belongs to the diacylglycerol/lipid kinase family. YegS lipid kinase subfamily. Mg(2+) is required as a cofactor. Ca(2+) serves as cofactor.

Its subcellular location is the cytoplasm. Probably phosphorylates lipids; the in vivo substrate is unknown. This Pseudomonas fluorescens (strain Pf0-1) protein is Probable lipid kinase YegS-like.